Reading from the N-terminus, the 45-residue chain is Photosystem II reaction center protein K (45 aa).

A propeptide spanning residues 1-8 (MNSALFLA) is cleaved from the precursor. A helical transmembrane segment spans residues 23-43 (ILPVIPVFFLLLAFVWQAAIG).

It belongs to the PsbK family. PSII is composed of 1 copy each of membrane proteins PsbA, PsbB, PsbC, PsbD, PsbE, PsbF, PsbH, PsbI, PsbJ, PsbK, PsbL, PsbM, PsbT, PsbX, PsbY, PsbZ, Psb30/Ycf12, at least 3 peripheral proteins of the oxygen-evolving complex and a large number of cofactors. It forms dimeric complexes.

Its subcellular location is the plastid. It is found in the chloroplast thylakoid membrane. Its function is as follows. One of the components of the core complex of photosystem II (PSII). PSII is a light-driven water:plastoquinone oxidoreductase that uses light energy to abstract electrons from H(2)O, generating O(2) and a proton gradient subsequently used for ATP formation. It consists of a core antenna complex that captures photons, and an electron transfer chain that converts photonic excitation into a charge separation. The protein is Photosystem II reaction center protein K of Pyropia yezoensis (Susabi-nori).